The sequence spans 175 residues: Transcription factor E (175 aa).

Positions asparagine 8–proline 90 constitute an HTH TFE/IIEalpha-type domain.

This sequence belongs to the TFE family. In terms of assembly, monomer. Interaction with RNA polymerase subunits RpoF and RpoE is necessary for Tfe stimulatory transcription activity. Able to interact with Tbp and RNA polymerase in the absence of DNA promoter. Interacts both with the preinitiation and elongation complexes.

Transcription factor that plays a role in the activation of archaeal genes transcribed by RNA polymerase. Facilitates transcription initiation by enhancing TATA-box recognition by TATA-box-binding protein (Tbp), and transcription factor B (Tfb) and RNA polymerase recruitment. Not absolutely required for transcription in vitro, but particularly important in cases where Tbp or Tfb function is not optimal. It dynamically alters the nucleic acid-binding properties of RNA polymerases by stabilizing the initiation complex and destabilizing elongation complexes. Seems to translocate with the RNA polymerase following initiation and acts by binding to the non template strand of the transcription bubble in elongation complexes. This is Transcription factor E from Natronomonas pharaonis (strain ATCC 35678 / DSM 2160 / CIP 103997 / JCM 8858 / NBRC 14720 / NCIMB 2260 / Gabara) (Halobacterium pharaonis).